A 249-amino-acid polypeptide reads, in one-letter code: tRNA (guanine-N(1)-)-methyltransferase (249 aa).

S-adenosyl-L-methionine is bound by residues Gly-116 and 136 to 141 (IGDYIL).

This sequence belongs to the RNA methyltransferase TrmD family. In terms of assembly, homodimer.

The protein resides in the cytoplasm. The catalysed reaction is guanosine(37) in tRNA + S-adenosyl-L-methionine = N(1)-methylguanosine(37) in tRNA + S-adenosyl-L-homocysteine + H(+). Specifically methylates guanosine-37 in various tRNAs. In Zymomonas mobilis subsp. mobilis (strain ATCC 31821 / ZM4 / CP4), this protein is tRNA (guanine-N(1)-)-methyltransferase.